Consider the following 129-residue polypeptide: Small ribosomal subunit protein uS11 (129 aa).

It belongs to the universal ribosomal protein uS11 family. In terms of assembly, part of the 30S ribosomal subunit. Interacts with proteins S7 and S18. Binds to IF-3.

In terms of biological role, located on the platform of the 30S subunit, it bridges several disparate RNA helices of the 16S rRNA. Forms part of the Shine-Dalgarno cleft in the 70S ribosome. The polypeptide is Small ribosomal subunit protein uS11 (Francisella tularensis subsp. tularensis (strain FSC 198)).